The following is a 339-amino-acid chain: Glycerol-3-phosphate dehydrogenase [NAD(P)+] (339 aa).

4 residues coordinate NADPH: S14, Y15, H35, and K109. Residues K109, G138, and T140 each coordinate sn-glycerol 3-phosphate. A142 lines the NADPH pocket. Residues K194, D247, S257, R258, and N259 each coordinate sn-glycerol 3-phosphate. K194 acts as the Proton acceptor in catalysis. Position 258 (R258) interacts with NADPH. Positions 282 and 284 each coordinate NADPH.

The protein belongs to the NAD-dependent glycerol-3-phosphate dehydrogenase family.

The protein localises to the cytoplasm. It catalyses the reaction sn-glycerol 3-phosphate + NAD(+) = dihydroxyacetone phosphate + NADH + H(+). The catalysed reaction is sn-glycerol 3-phosphate + NADP(+) = dihydroxyacetone phosphate + NADPH + H(+). Its pathway is membrane lipid metabolism; glycerophospholipid metabolism. In terms of biological role, catalyzes the reduction of the glycolytic intermediate dihydroxyacetone phosphate (DHAP) to sn-glycerol 3-phosphate (G3P), the key precursor for phospholipid synthesis. The chain is Glycerol-3-phosphate dehydrogenase [NAD(P)+] from Shewanella halifaxensis (strain HAW-EB4).